Here is a 236-residue protein sequence, read N- to C-terminus: uncharacterized protein (236 aa).

The signal sequence occupies residues 1-24 (MRKKHFNMILKLALISSLLALAAS). N-linked (GlcNAc...) asparagine glycosylation is found at Asn-59, Asn-171, and Asn-197.

The protein resides in the secreted. This is an uncharacterized protein from Caenorhabditis elegans.